A 684-amino-acid chain; its full sequence is Glycine--tRNA ligase beta subunit (684 aa).

It belongs to the class-II aminoacyl-tRNA synthetase family. As to quaternary structure, tetramer of two alpha and two beta subunits.

It localises to the cytoplasm. It carries out the reaction tRNA(Gly) + glycine + ATP = glycyl-tRNA(Gly) + AMP + diphosphate. The protein is Glycine--tRNA ligase beta subunit of Pseudomonas savastanoi pv. phaseolicola (strain 1448A / Race 6) (Pseudomonas syringae pv. phaseolicola (strain 1448A / Race 6)).